Consider the following 239-residue polypeptide: Phosphoribosylaminoimidazole-succinocarboxamide synthase (239 aa).

Belongs to the SAICAR synthetase family.

The catalysed reaction is 5-amino-1-(5-phospho-D-ribosyl)imidazole-4-carboxylate + L-aspartate + ATP = (2S)-2-[5-amino-1-(5-phospho-beta-D-ribosyl)imidazole-4-carboxamido]succinate + ADP + phosphate + 2 H(+). It functions in the pathway purine metabolism; IMP biosynthesis via de novo pathway; 5-amino-1-(5-phospho-D-ribosyl)imidazole-4-carboxamide from 5-amino-1-(5-phospho-D-ribosyl)imidazole-4-carboxylate: step 1/2. This chain is Phosphoribosylaminoimidazole-succinocarboxamide synthase, found in Bacillus cereus (strain 03BB102).